The following is a 267-amino-acid chain: Inositol-1-monophosphatase (267 aa).

Mg(2+)-binding residues include glutamate 66, aspartate 84, leucine 86, and aspartate 87. A substrate-binding site is contributed by glutamate 66. Substrate-binding positions include 86–89, arginine 182, and aspartate 213; that span reads LDGS. Aspartate 213 contacts Mg(2+).

The protein belongs to the inositol monophosphatase superfamily. Requires Mg(2+) as cofactor.

The enzyme catalyses a myo-inositol phosphate + H2O = myo-inositol + phosphate. The sequence is that of Inositol-1-monophosphatase (suhB) from Aeropyrum pernix (strain ATCC 700893 / DSM 11879 / JCM 9820 / NBRC 100138 / K1).